A 183-amino-acid chain; its full sequence is Dual-action ribosomal maturation protein DarP (183 aa).

The protein belongs to the DarP family.

The protein resides in the cytoplasm. Its function is as follows. Member of a network of 50S ribosomal subunit biogenesis factors which assembles along the 30S-50S interface, preventing incorrect 23S rRNA structures from forming. Promotes peptidyl transferase center (PTC) maturation. This Shigella boydii serotype 18 (strain CDC 3083-94 / BS512) protein is Dual-action ribosomal maturation protein DarP.